The chain runs to 379 residues: Homoserine O-succinyltransferase (379 aa).

An AB hydrolase-1 domain is found at 51 to 360 (NAVLICHALS…DAPQGHDAFL (310 aa)). The active-site Nucleophile is serine 157. Arginine 227 provides a ligand contact to substrate. Residues aspartate 323 and histidine 356 contribute to the active site. Aspartate 357 serves as a coordination point for substrate.

Belongs to the AB hydrolase superfamily. MetX family. In terms of assembly, homodimer.

The protein resides in the cytoplasm. The enzyme catalyses L-homoserine + succinyl-CoA = O-succinyl-L-homoserine + CoA. It participates in amino-acid biosynthesis; L-methionine biosynthesis via de novo pathway; O-succinyl-L-homoserine from L-homoserine: step 1/1. With respect to regulation, requires MetW for activity. Functionally, transfers a succinyl group from succinyl-CoA to L-homoserine, forming succinyl-L-homoserine. In Pseudomonas syringae pv. syringae (strain B728a), this protein is Homoserine O-succinyltransferase.